Consider the following 640-residue polypeptide: Threonine--tRNA ligase (640 aa).

Residues 1 to 61 (MPIITLPNGD…TEDSTLQIIT (61 aa)) enclose the TGS domain. The interval 242-533 (DHRKIGKALD…LIEHYAGFMP (292 aa)) is catalytic. Residues Cys333, His384, and His510 each contribute to the Zn(2+) site.

Belongs to the class-II aminoacyl-tRNA synthetase family. In terms of assembly, homodimer. Requires Zn(2+) as cofactor.

The protein localises to the cytoplasm. The catalysed reaction is tRNA(Thr) + L-threonine + ATP = L-threonyl-tRNA(Thr) + AMP + diphosphate + H(+). In terms of biological role, catalyzes the attachment of threonine to tRNA(Thr) in a two-step reaction: L-threonine is first activated by ATP to form Thr-AMP and then transferred to the acceptor end of tRNA(Thr). Also edits incorrectly charged L-seryl-tRNA(Thr). In Acinetobacter baumannii (strain AB307-0294), this protein is Threonine--tRNA ligase.